Consider the following 264-residue polypeptide: Tropinone reductase homolog At5g06060 (264 aa).

An NADP(+)-binding site is contributed by 15 to 39 (LVTGGTRGIGRAVVEELAKFGAKVH). Substrate is bound at residue serine 148. Residue tyrosine 161 is the Proton acceptor of the active site.

It belongs to the short-chain dehydrogenases/reductases (SDR) family. SDR65C subfamily.

In Arabidopsis thaliana (Mouse-ear cress), this protein is Tropinone reductase homolog At5g06060.